Consider the following 452-residue polypeptide: Phosphoglucosamine mutase (452 aa).

The Phosphoserine intermediate role is filled by Ser108. Mg(2+)-binding residues include Ser108, Asp247, Asp249, and Asp251. Ser108 carries the post-translational modification Phosphoserine.

This sequence belongs to the phosphohexose mutase family. It depends on Mg(2+) as a cofactor. In terms of processing, activated by phosphorylation.

The catalysed reaction is alpha-D-glucosamine 1-phosphate = D-glucosamine 6-phosphate. In terms of biological role, catalyzes the conversion of glucosamine-6-phosphate to glucosamine-1-phosphate. The protein is Phosphoglucosamine mutase of Burkholderia thailandensis (strain ATCC 700388 / DSM 13276 / CCUG 48851 / CIP 106301 / E264).